The sequence spans 102 residues: MDHPHKWHRKLVNCNSDFIFKSRGHFVSISSQLGQHNFTIFNRYHLKKRIVFQILVNSSLRFSEQNFSITQNEAGIWKQLFNSPQSFPHTDIPSEEGTKVIL.

This is an uncharacterized protein from Saccharomyces cerevisiae (strain ATCC 204508 / S288c) (Baker's yeast).